The chain runs to 322 residues: Ribose-phosphate pyrophosphokinase 1 (322 aa).

ATP contacts are provided by residues 39–41 (DGE) and 98–99 (RQ). Positions 132 and 173 each coordinate Mg(2+). Residue Lys-196 is part of the active site. D-ribose 5-phosphate contacts are provided by residues Arg-198, Asp-224, and 228–232 (DTAGT).

Belongs to the ribose-phosphate pyrophosphokinase family. Class I subfamily. In terms of assembly, homohexamer. Mg(2+) serves as cofactor.

Its subcellular location is the cytoplasm. The enzyme catalyses D-ribose 5-phosphate + ATP = 5-phospho-alpha-D-ribose 1-diphosphate + AMP + H(+). It participates in metabolic intermediate biosynthesis; 5-phospho-alpha-D-ribose 1-diphosphate biosynthesis; 5-phospho-alpha-D-ribose 1-diphosphate from D-ribose 5-phosphate (route I): step 1/1. Involved in the biosynthesis of the central metabolite phospho-alpha-D-ribosyl-1-pyrophosphate (PRPP) via the transfer of pyrophosphoryl group from ATP to 1-hydroxyl of ribose-5-phosphate (Rib-5-P). The protein is Ribose-phosphate pyrophosphokinase 1 of Streptococcus mutans serotype c (strain ATCC 700610 / UA159).